The chain runs to 368 residues: Phospho-N-acetylmuramoyl-pentapeptide-transferase (368 aa).

9 helical membrane passes run 23-43, 72-92, 94-114, 139-159, 170-190, 201-221, 238-258, 265-286, and 345-365; these read YITFRAGAAAVTALIIILVFG, IPTMGGLMIILAIEVSGLLWA, IAEPFVWMVLLAIIWMGAVGF, VALGLIIGGYTFFDPTLSVLL, ITVDYGIWYIPLAIFIVTAVS, GLAAGSTAISVFSLAGFAYLT, AGEVTILSMAIVAACIGFLWF, VFMGDTGSLALGSAVAVIALLI, and KIVIRFWIIEVLLVLTSLLTL.

It belongs to the glycosyltransferase 4 family. MraY subfamily. It depends on Mg(2+) as a cofactor.

It localises to the cell inner membrane. The enzyme catalyses UDP-N-acetyl-alpha-D-muramoyl-L-alanyl-gamma-D-glutamyl-meso-2,6-diaminopimeloyl-D-alanyl-D-alanine + di-trans,octa-cis-undecaprenyl phosphate = di-trans,octa-cis-undecaprenyl diphospho-N-acetyl-alpha-D-muramoyl-L-alanyl-D-glutamyl-meso-2,6-diaminopimeloyl-D-alanyl-D-alanine + UMP. Its pathway is cell wall biogenesis; peptidoglycan biosynthesis. Catalyzes the initial step of the lipid cycle reactions in the biosynthesis of the cell wall peptidoglycan: transfers peptidoglycan precursor phospho-MurNAc-pentapeptide from UDP-MurNAc-pentapeptide onto the lipid carrier undecaprenyl phosphate, yielding undecaprenyl-pyrophosphoryl-MurNAc-pentapeptide, known as lipid I. This Chloroherpeton thalassium (strain ATCC 35110 / GB-78) protein is Phospho-N-acetylmuramoyl-pentapeptide-transferase.